Reading from the N-terminus, the 622-residue chain is Kelch-like protein 14 (622 aa).

The 113-residue stretch at 33-145 (CDVTLTAQGQ…LYTANVTLSL (113 aa)) folds into the BTB domain. The segment at 73 to 108 (ALGPGAQDGLGGAPPKEPPPPPQEEPGTPSSSPEDK) is disordered. The segment covering 87–96 (PKEPPPPPQE) has biased composition (pro residues). 6 Kelch repeats span residues 317–366 (MLLL…EVEN), 367–418 (FLFV…RLDK), 419–465 (NLYV…VHNG), 467–512 (IYIS…VMND), 514–564 (LYAI…VLDD), and 566–614 (IYLV…TVIL).

The protein localises to the cytoplasm. It localises to the cytosol. It is found in the endoplasmic reticulum membrane. The polypeptide is Kelch-like protein 14 (KLHL14) (Gallus gallus (Chicken)).